Here is a 248-residue protein sequence, read N- to C-terminus: Ubiquinone biosynthesis O-methyltransferase (248 aa).

S-adenosyl-L-methionine contacts are provided by Arg-41, Gly-72, Asp-93, and Met-136.

Belongs to the methyltransferase superfamily. UbiG/COQ3 family.

It carries out the reaction a 3-demethylubiquinol + S-adenosyl-L-methionine = a ubiquinol + S-adenosyl-L-homocysteine + H(+). The catalysed reaction is a 3-(all-trans-polyprenyl)benzene-1,2-diol + S-adenosyl-L-methionine = a 2-methoxy-6-(all-trans-polyprenyl)phenol + S-adenosyl-L-homocysteine + H(+). Its pathway is cofactor biosynthesis; ubiquinone biosynthesis. Functionally, O-methyltransferase that catalyzes the 2 O-methylation steps in the ubiquinone biosynthetic pathway. This chain is Ubiquinone biosynthesis O-methyltransferase, found in Rhizobium johnstonii (strain DSM 114642 / LMG 32736 / 3841) (Rhizobium leguminosarum bv. viciae).